A 642-amino-acid chain; its full sequence is Chaperone protein DnaK (642 aa).

Thr-198 carries the phosphothreonine; by autocatalysis modification. The tract at residues 602-642 is disordered; it reads EAAGGAEAEAAAGGHGGASGSHDDKVVDADFEEVDGDKKGK. Residues 603–613 are compositionally biased toward low complexity; the sequence is AAGGAEAEAAA.

It belongs to the heat shock protein 70 family.

Acts as a chaperone. The protein is Chaperone protein DnaK of Paramagnetospirillum magneticum (strain ATCC 700264 / AMB-1) (Magnetospirillum magneticum).